The primary structure comprises 88 residues: DASH complex subunit HSK3 (88 aa).

The span at 1–15 (MSSRGSGANAASRQS) shows a compositional bias: low complexity. The tract at residues 1–24 (MSSRGSGANAASRQSMTASGGAVK) is disordered.

The protein belongs to the DASH complex HSK3 family. Component of the DASH complex consisting of ASK1, DAD1, DAD2, DAD3, DAD4, DAM1, DUO1, HSK3, SPC19 and SPC34, with a stoichiometry of one copy of each subunit per complex. Multiple DASH complexes oligomerize to form a ring that encircles spindle microtubules and organizes the rod-like NDC80 complexes of the outer kinetochore. DASH complex oligomerization strengthens microtubule attachments. On cytoplasmic microtubules, DASH complexes appear to form patches instead of rings.

The protein resides in the nucleus. The protein localises to the cytoplasm. Its subcellular location is the cytoskeleton. It localises to the spindle. It is found in the chromosome. The protein resides in the centromere. The protein localises to the kinetochore. Its function is as follows. Component of the DASH complex that connects microtubules with kinetochores and couples microtubule depolymerisation to chromosome movement; it is involved in retrieving kinetochores to the spindle poles before their re-orientation on the spindle in early mitosis and allows microtubule depolymerization to pull chromosomes apart and resist detachment during anaphase. Kinetochores, consisting of a centromere-associated inner segment and a microtubule-contacting outer segment, play a crucial role in chromosome segregation by mediating the physical connection between centromeric DNA and microtubules. Kinetochores also serve as an input point for the spindle assembly checkpoint, which delays anaphase until all chromosomes have bioriented on the mitotic spindle. This Chaetomium thermophilum (strain DSM 1495 / CBS 144.50 / IMI 039719) (Thermochaetoides thermophila) protein is DASH complex subunit HSK3.